Here is a 192-residue protein sequence, read N- to C-terminus: Probable GTP-binding protein EngB (192 aa).

In terms of domain architecture, EngB-type G spans 22-192 (QLPEIVFVGR…LLEQLAIYTG (171 aa)). GTP is bound by residues 30-37 (GRSNVGKS), 57-61 (GKTQL), 75-78 (DLPG), 142-145 (TKYD), and 172-174 (YSA). The Mg(2+) site is built by Ser37 and Thr59.

The protein belongs to the TRAFAC class TrmE-Era-EngA-EngB-Septin-like GTPase superfamily. EngB GTPase family. Mg(2+) serves as cofactor.

In terms of biological role, necessary for normal cell division and for the maintenance of normal septation. This Chlorobium phaeobacteroides (strain BS1) protein is Probable GTP-binding protein EngB.